The following is a 627-amino-acid chain: Probable inactive receptor kinase At3g02880 (627 aa).

Positions 1–23 (MKYKRKLSLSVVFLFVFYLAAVT) are cleaved as a signal peptide. LRR repeat units follow at residues 91–112 (QLKT…DFSN), 115–137 (LLRY…LFTL), 139–161 (SIIR…VNSA), 163–184 (RLVT…ITLP), and 185–206 (LQQF…LSSW). The disordered stretch occupies residues 222 to 246 (DTCEAESPNGGDAGGPNTPPEKKDS). The chain crosses the membrane as a helical span at residues 253–273 (AIVGIVIGCVVGLLLLLLILF). A Protein kinase domain is found at 345–620 (KASAEVLGKG…LIEEVSHSSG (276 aa)). S347 is modified (phosphoserine). ATP contacts are provided by residues 351-359 (LGKGTVGSS) and K373. A helical transmembrane segment spans residues 389–409 (LHVLGSMSHANLVTLIAYYFS). The residue at position 424 (S424) is a Phosphoserine. The residue at position 444 (T444) is a Phosphothreonine. At S519 the chain carries Phosphoserine. Residue T595 is modified to Phosphothreonine. Phosphoserine is present on residues S621 and S626.

Belongs to the protein kinase superfamily. Ser/Thr protein kinase family.

The protein localises to the membrane. The chain is Probable inactive receptor kinase At3g02880 from Arabidopsis thaliana (Mouse-ear cress).